Here is a 230-residue protein sequence, read N- to C-terminus: Pyridoxine/pyridoxamine 5'-phosphate oxidase (230 aa).

Residues 21–24 and K87 contribute to the substrate site; that span reads RVEY. FMN is bound by residues 82–87, 97–98, K104, and Q126; these read RSVLCK and YT. The substrate site is built by Y144, R148, and S152. FMN-binding positions include 161-162 and W207; that span reads QS. 213 to 215 contacts substrate; the sequence is RVH. An FMN-binding site is contributed by R217.

The protein belongs to the pyridoxamine 5'-phosphate oxidase family. As to quaternary structure, homodimer. Requires FMN as cofactor.

The enzyme catalyses pyridoxamine 5'-phosphate + O2 + H2O = pyridoxal 5'-phosphate + H2O2 + NH4(+). It carries out the reaction pyridoxine 5'-phosphate + O2 = pyridoxal 5'-phosphate + H2O2. The protein operates within cofactor metabolism; pyridoxal 5'-phosphate salvage; pyridoxal 5'-phosphate from pyridoxamine 5'-phosphate: step 1/1. Its pathway is cofactor metabolism; pyridoxal 5'-phosphate salvage; pyridoxal 5'-phosphate from pyridoxine 5'-phosphate: step 1/1. In terms of biological role, catalyzes the oxidation of either pyridoxine 5'-phosphate (PNP) or pyridoxamine 5'-phosphate (PMP) into pyridoxal 5'-phosphate (PLP). This chain is Pyridoxine/pyridoxamine 5'-phosphate oxidase, found in Mycolicibacterium smegmatis (strain ATCC 700084 / mc(2)155) (Mycobacterium smegmatis).